We begin with the raw amino-acid sequence, 106 residues long: Large ribosomal subunit protein uL24 (106 aa).

The protein belongs to the universal ribosomal protein uL24 family. As to quaternary structure, part of the 50S ribosomal subunit.

Its function is as follows. One of two assembly initiator proteins, it binds directly to the 5'-end of the 23S rRNA, where it nucleates assembly of the 50S subunit. One of the proteins that surrounds the polypeptide exit tunnel on the outside of the subunit. The chain is Large ribosomal subunit protein uL24 from Azobacteroides pseudotrichonymphae genomovar. CFP2.